The following is a 162-amino-acid chain: Proepiregulin (162 aa).

A signal peptide spans 1-22 (METLPASWVLTLLCLGSHLLQA). The propeptide occupies 23 to 55 (VISTTVIPSCIPGESEDNCTALVQMEDDPRVAQ). A glycan (N-linked (GlcNAc...) asparagine) is linked at asparagine 40. Topologically, residues 53 to 112 (VAQVQITKCSSDMDGYCLHGQCIYLVDMREKFCRCEVGYTGLRCEHFFLTVHQPLSKEYV) are extracellular. The 41-residue stretch at 57–97 (QITKCSSDMDGYCLHGQCIYLVDMREKFCRCEVGYTGLRCE) folds into the EGF-like domain. Disulfide bonds link cysteine 61-cysteine 74, cysteine 69-cysteine 85, and cysteine 87-cysteine 96. Positions 102–162 (TVHQPLSKEY…TSGDPVLPQV (61 aa)) are cleaved as a propeptide — removed in mature form. Residues 113–133 (ALTVILIFLFLIITAGCIYYF) form a helical membrane-spanning segment. The Cytoplasmic portion of the chain corresponds to 134–162 (CRWYKNRKSKKSREEYERVTSGDPVLPQV).

As to quaternary structure, interacts with EGFR and ERBB4.

The protein resides in the secreted. It localises to the extracellular space. Its subcellular location is the cell membrane. Functionally, ligand of the EGF receptor/EGFR and ERBB4. Stimulates EGFR and ERBB4 tyrosine phosphorylation. Contributes to inflammation, wound healing, tissue repair, and oocyte maturation by regulating angiogenesis and vascular remodeling and by stimulating cell proliferation. This chain is Proepiregulin (Ereg), found in Mus musculus (Mouse).